Consider the following 261-residue polypeptide: Histone H1-I (261 aa).

Residues 1 to 22 (MSETEAAPVVAPAAEAAPAAEA) show a composition bias toward low complexity. 2 disordered regions span residues 1–63 (MSET…PPYI) and 125–261 (FKLS…KGKK). Residues 41–50 (APKEPKAPKE) are compositionally biased toward basic and acidic residues. The region spanning 58–129 (THPPYIEMVK…KVKGSFKLSE (72 aa)) is the H15 domain. Positions 133 to 142 (AKAKKSTPKK) are enriched in basic residues. 2 consecutive repeat copies span residues 136–140 (KKSTP) and 188–192 (KKATP). The 7 X 5 AA repeats of K-K-[AS]-T-P stretch occupies residues 136–250 (KKSTPKKAKA…KKAPAKKSTP (115 aa)). Residues 139–142 (TPKK) mediate DNA binding. Over residues 143–198 (AKADGEAKPKKSEAKPKKAEAVKKTKAPKEKVERPKKEKKEKVEKKKATPKAEKPK) the composition is skewed to basic and acidic residues. A 3; approximate repeat occupies 199–203 (KAATP). Repeat copies occupy residues 209–213 (KKATP), 230–234 (KKATP), 236–240 (KKAAP), and 246–250 (KKSTP). Residues 227–250 (AKPKKATPSKKAAPKKAPAKKSTP) show a composition bias toward basic residues. Positions 251-261 (KAKEAKSKGKK) are enriched in basic and acidic residues.

It belongs to the histone H1/H5 family.

Its subcellular location is the nucleus. It localises to the chromosome. Histones H1 are necessary for the condensation of nucleosome chains into higher-order structures. The sequence is that of Histone H1-I (H1-I) from Volvox carteri (Green alga).